The primary structure comprises 201 residues: 3-isopropylmalate dehydratase small subunit (201 aa).

Belongs to the LeuD family. LeuD type 1 subfamily. Heterodimer of LeuC and LeuD.

The enzyme catalyses (2R,3S)-3-isopropylmalate = (2S)-2-isopropylmalate. Its pathway is amino-acid biosynthesis; L-leucine biosynthesis; L-leucine from 3-methyl-2-oxobutanoate: step 2/4. In terms of biological role, catalyzes the isomerization between 2-isopropylmalate and 3-isopropylmalate, via the formation of 2-isopropylmaleate. The chain is 3-isopropylmalate dehydratase small subunit from Klebsiella pneumoniae (strain 342).